We begin with the raw amino-acid sequence, 137 residues long: Large-conductance mechanosensitive channel (137 aa).

Transmembrane regions (helical) follow at residues 9 to 29 and 79 to 99; these read AFAV…GAAF and IQSV…VKAI.

Belongs to the MscL family. As to quaternary structure, homopentamer.

The protein resides in the cell inner membrane. Its function is as follows. Channel that opens in response to stretch forces in the membrane lipid bilayer. May participate in the regulation of osmotic pressure changes within the cell. This chain is Large-conductance mechanosensitive channel, found in Pseudomonas fluorescens (strain Pf0-1).